A 94-amino-acid polypeptide reads, in one-letter code: Aspartyl/glutamyl-tRNA(Asn/Gln) amidotransferase subunit C (94 aa).

Belongs to the GatC family. Heterotrimer of A, B and C subunits.

The catalysed reaction is L-glutamyl-tRNA(Gln) + L-glutamine + ATP + H2O = L-glutaminyl-tRNA(Gln) + L-glutamate + ADP + phosphate + H(+). It catalyses the reaction L-aspartyl-tRNA(Asn) + L-glutamine + ATP + H2O = L-asparaginyl-tRNA(Asn) + L-glutamate + ADP + phosphate + 2 H(+). In terms of biological role, allows the formation of correctly charged Asn-tRNA(Asn) or Gln-tRNA(Gln) through the transamidation of misacylated Asp-tRNA(Asn) or Glu-tRNA(Gln) in organisms which lack either or both of asparaginyl-tRNA or glutaminyl-tRNA synthetases. The reaction takes place in the presence of glutamine and ATP through an activated phospho-Asp-tRNA(Asn) or phospho-Glu-tRNA(Gln). The sequence is that of Aspartyl/glutamyl-tRNA(Asn/Gln) amidotransferase subunit C from Nitratidesulfovibrio vulgaris (strain ATCC 29579 / DSM 644 / CCUG 34227 / NCIMB 8303 / VKM B-1760 / Hildenborough) (Desulfovibrio vulgaris).